A 388-amino-acid chain; its full sequence is Succinate--CoA ligase [ADP-forming] subunit beta (388 aa).

The region spanning 9 to 244 is the ATP-grasp domain; sequence KQLFARYGLP…QSQEDPREAQ (236 aa). ATP-binding positions include K46, 53–55, E99, T102, and E107; that span reads GRG. Mg(2+) contacts are provided by N199 and D213. Substrate is bound by residues N264 and 321–323; that span reads GIV.

The protein belongs to the succinate/malate CoA ligase beta subunit family. Heterotetramer of two alpha and two beta subunits. It depends on Mg(2+) as a cofactor.

The catalysed reaction is succinate + ATP + CoA = succinyl-CoA + ADP + phosphate. It catalyses the reaction GTP + succinate + CoA = succinyl-CoA + GDP + phosphate. Its pathway is carbohydrate metabolism; tricarboxylic acid cycle; succinate from succinyl-CoA (ligase route): step 1/1. Its function is as follows. Succinyl-CoA synthetase functions in the citric acid cycle (TCA), coupling the hydrolysis of succinyl-CoA to the synthesis of either ATP or GTP and thus represents the only step of substrate-level phosphorylation in the TCA. The beta subunit provides nucleotide specificity of the enzyme and binds the substrate succinate, while the binding sites for coenzyme A and phosphate are found in the alpha subunit. The protein is Succinate--CoA ligase [ADP-forming] subunit beta of Escherichia coli O139:H28 (strain E24377A / ETEC).